A 436-amino-acid polypeptide reads, in one-letter code: Exodeoxyribonuclease 7 large subunit (436 aa).

The interval Pro-412–Ala-436 is disordered. Positions Asn-417–Ala-436 are enriched in low complexity.

It belongs to the XseA family. As to quaternary structure, heterooligomer composed of large and small subunits.

Its subcellular location is the cytoplasm. It catalyses the reaction Exonucleolytic cleavage in either 5'- to 3'- or 3'- to 5'-direction to yield nucleoside 5'-phosphates.. Functionally, bidirectionally degrades single-stranded DNA into large acid-insoluble oligonucleotides, which are then degraded further into small acid-soluble oligonucleotides. The chain is Exodeoxyribonuclease 7 large subunit from Corynebacterium jeikeium (strain K411).